Here is a 270-residue protein sequence, read N- to C-terminus: Dihydroorotate dehydrogenase B (NAD(+)), catalytic subunit (270 aa).

Residues serine 12 and lysine 35 to threonine 36 contribute to the FMN site. Substrate contacts are provided by residues lysine 35, asparagine 59–leucine 63, and asparagine 114. Asparagine 114 contacts FMN. The Nucleophile role is filled by cysteine 117. FMN is bound by residues lysine 153 and valine 179. Residue asparagine 180–threonine 181 participates in substrate binding. FMN contacts are provided by residues glycine 199, glycine 226–glycine 227, and glycine 248–serine 249.

The protein belongs to the dihydroorotate dehydrogenase family. Type 1 subfamily. In terms of assembly, heterotetramer of 2 PyrK and 2 PyrD type B subunits. Requires FMN as cofactor.

The protein resides in the cytoplasm. The enzyme catalyses (S)-dihydroorotate + NAD(+) = orotate + NADH + H(+). It participates in pyrimidine metabolism; UMP biosynthesis via de novo pathway; orotate from (S)-dihydroorotate (NAD(+) route): step 1/1. Its function is as follows. Catalyzes the conversion of dihydroorotate to orotate with NAD(+) as electron acceptor. The polypeptide is Dihydroorotate dehydrogenase B (NAD(+)), catalytic subunit (pyrD) (Thermotoga maritima (strain ATCC 43589 / DSM 3109 / JCM 10099 / NBRC 100826 / MSB8)).